A 192-amino-acid chain; its full sequence is SPbeta prophage-derived uncharacterized protein YokK (192 aa).

The protein is SPbeta prophage-derived uncharacterized protein YokK (yokK) of Bacillus subtilis (strain 168).